Reading from the N-terminus, the 673-residue chain is DNA ligase (673 aa).

Residues 34–38, 83–84, and glutamate 116 contribute to the NAD(+) site; these read DAEYD and SL. Lysine 118 acts as the N6-AMP-lysine intermediate in catalysis. Arginine 139, glutamate 176, lysine 293, and lysine 317 together coordinate NAD(+). Zn(2+)-binding residues include cysteine 411, cysteine 414, cysteine 429, and cysteine 435. The region spanning 595-673 is the BRCT domain; sequence NQQNPFFGKT…EDEFLKWVNS (79 aa).

The protein belongs to the NAD-dependent DNA ligase family. LigA subfamily. Mg(2+) serves as cofactor. It depends on Mn(2+) as a cofactor.

The catalysed reaction is NAD(+) + (deoxyribonucleotide)n-3'-hydroxyl + 5'-phospho-(deoxyribonucleotide)m = (deoxyribonucleotide)n+m + AMP + beta-nicotinamide D-nucleotide.. In terms of biological role, DNA ligase that catalyzes the formation of phosphodiester linkages between 5'-phosphoryl and 3'-hydroxyl groups in double-stranded DNA using NAD as a coenzyme and as the energy source for the reaction. It is essential for DNA replication and repair of damaged DNA. This chain is DNA ligase, found in Legionella pneumophila (strain Corby).